A 267-amino-acid polypeptide reads, in one-letter code: tRNA pseudouridine synthase A (267 aa).

Residue Asp-51 is the Nucleophile of the active site. Residue Tyr-109 coordinates substrate.

Belongs to the tRNA pseudouridine synthase TruA family. In terms of assembly, homodimer.

It catalyses the reaction uridine(38/39/40) in tRNA = pseudouridine(38/39/40) in tRNA. Formation of pseudouridine at positions 38, 39 and 40 in the anticodon stem and loop of transfer RNAs. This is tRNA pseudouridine synthase A from Staphylococcus epidermidis (strain ATCC 35984 / DSM 28319 / BCRC 17069 / CCUG 31568 / BM 3577 / RP62A).